The sequence spans 130 residues: Sulfurtransferase TusD (130 aa).

Cys-80 functions as the Cysteine persulfide intermediate in the catalytic mechanism.

Belongs to the DsrE/TusD family. As to quaternary structure, heterohexamer, formed by a dimer of trimers. The hexameric TusBCD complex contains 2 copies each of TusB, TusC and TusD. The TusBCD complex interacts with TusE.

The protein resides in the cytoplasm. Functionally, part of a sulfur-relay system required for 2-thiolation of 5-methylaminomethyl-2-thiouridine (mnm(5)s(2)U) at tRNA wobble positions. Accepts sulfur from TusA and transfers it in turn to TusE. This is Sulfurtransferase TusD from Sodalis glossinidius (strain morsitans).